The following is a 130-amino-acid chain: Ribosome biogenesis inhibitor MINAS-60 (130 aa).

Residues 61 to 130 (SKVQRIPTRP…RRRRPVTSSC (70 aa)) form a disordered region. Positions 109 to 130 (KGRRRRRRMRRRRRRRPVTSSC) are enriched in basic residues.

In terms of assembly, interacts with 60S ribosome assembly factors GTPBP4 and MRTO4.

It is found in the nucleus. Its subcellular location is the nucleolus. Functionally, acts as a late-stage inhibitor of pre-60S ribosome assembly by preventing pre-60S ribosome export from nucleus. This chain is Ribosome biogenesis inhibitor MINAS-60, found in Mus musculus (Mouse).